Here is a 1087-residue protein sequence, read N- to C-terminus: DNA polymerase II large subunit (1087 aa).

The protein belongs to the archaeal DNA polymerase II family. As to quaternary structure, heterodimer of a large subunit and a small subunit.

It catalyses the reaction DNA(n) + a 2'-deoxyribonucleoside 5'-triphosphate = DNA(n+1) + diphosphate. It carries out the reaction Exonucleolytic cleavage in the 3'- to 5'-direction to yield nucleoside 5'-phosphates.. Functionally, possesses two activities: a DNA synthesis (polymerase) and an exonucleolytic activity that degrades single-stranded DNA in the 3'- to 5'-direction. Has a template-primer preference which is characteristic of a replicative DNA polymerase. This Thermoplasma acidophilum (strain ATCC 25905 / DSM 1728 / JCM 9062 / NBRC 15155 / AMRC-C165) protein is DNA polymerase II large subunit (polC).